The following is a 147-amino-acid chain: Nucleoside diphosphate kinase (147 aa).

ATP-binding residues include Lys9, Phe57, Arg85, Thr91, Arg102, and Asn112. The active-site Pros-phosphohistidine intermediate is His115.

It belongs to the NDK family. In terms of assembly, homotetramer. The cofactor is Mg(2+).

Its subcellular location is the cytoplasm. It catalyses the reaction a 2'-deoxyribonucleoside 5'-diphosphate + ATP = a 2'-deoxyribonucleoside 5'-triphosphate + ADP. The enzyme catalyses a ribonucleoside 5'-diphosphate + ATP = a ribonucleoside 5'-triphosphate + ADP. Major role in the synthesis of nucleoside triphosphates other than ATP. The ATP gamma phosphate is transferred to the NDP beta phosphate via a ping-pong mechanism, using a phosphorylated active-site intermediate. This chain is Nucleoside diphosphate kinase, found in Listeria monocytogenes serotype 4b (strain F2365).